A 340-amino-acid chain; its full sequence is Adenosine receptor A2b (340 aa).

Residues 1–6 (MNTMKT) are Extracellular-facing. Residues 7–31 (TYIVLELIIAVLSIAGNVLVCWAVA) traverse the membrane as a helical segment. At 32 to 41 (INSTLKNATN) the chain is on the cytoplasmic side. Residues 42-65 (YFLVSLAVADIAVGLLAIPFAITI) traverse the membrane as a helical segment. The Extracellular segment spans residues 66–76 (SIGFQVDFHSC). The cysteines at positions 76 and 171 are disulfide-linked. A helical membrane pass occupies residues 77–99 (LFFACFVLVLTQSSIFSLLAVAI). At 100–119 (DRYLAIKIPLRYNSLVTGKR) the chain is on the cytoplasmic side. The chain crosses the membrane as a helical span at residues 120-142 (ARGLIAVLWLLSFVIGLTPLMGW). The Extracellular portion of the chain corresponds to 143–178 (NKAMSGCPNSTNETGADHGAGHHGCFISCLFENVVT). Asn151 and Asn154 each carry an N-linked (GlcNAc...) asparagine glycan. Glu174 contacts adenosine. Residues 179–203 (MSYMVYFNFFGCVLLPLIIMLGIYI) traverse the membrane as a helical segment. Residues 204–235 (KIFMVACKQLHQIELMGNSRTTLQKEVHAAKS) are Cytoplasmic-facing. A helical membrane pass occupies residues 236-259 (LAIIVGLFAFCWLPLHILNCITHF). Asn254 is an adenosine binding site. Topologically, residues 260–267 (HEEFSKSK) are extracellular. A helical membrane pass occupies residues 268 to 291 (PEWVMYVAIILSHANSVINPIIYA). Adenosine contacts are provided by Ser279 and His280. The Cytoplasmic segment spans residues 292–340 (YRIRDFRYTFHKIISKILCKTDDFPKCTTDNNQHLTVTNVNAPAASVTI). The S-palmitoyl cysteine moiety is linked to residue Cys310.

It belongs to the G-protein coupled receptor 1 family.

It localises to the cell membrane. Its function is as follows. Receptor for adenosine. The activity of this receptor is mediated by G proteins which activate adenylyl cyclase. The sequence is that of Adenosine receptor A2b (ADORA2B) from Gallus gallus (Chicken).